A 538-amino-acid polypeptide reads, in one-letter code: Chaperonin GroEL (538 aa).

ATP is bound by residues 29–32 (TLGP), 86–90 (DGTTT), Gly-413, 479–481 (DAL), and Asp-495.

Belongs to the chaperonin (HSP60) family. In terms of assembly, forms a cylinder of 14 subunits composed of two heptameric rings stacked back-to-back. Interacts with the co-chaperonin GroES.

It localises to the cytoplasm. It carries out the reaction ATP + H2O + a folded polypeptide = ADP + phosphate + an unfolded polypeptide.. Its function is as follows. Together with its co-chaperonin GroES, plays an essential role in assisting protein folding. The GroEL-GroES system forms a nano-cage that allows encapsulation of the non-native substrate proteins and provides a physical environment optimized to promote and accelerate protein folding. The sequence is that of Chaperonin GroEL from Thermotoga petrophila (strain ATCC BAA-488 / DSM 13995 / JCM 10881 / RKU-1).